Consider the following 64-residue polypeptide: MTQGKRKHPCDLKNPSKRAPPATCNKPNGAILCGDFCLHEGYNIGKCVMRRTGKACICSQCEGW.

The segment at 1 to 21 (MTQGKRKHPCDLKNPSKRAPP) is disordered. Disulfide bonds link C10–C61, C24–C47, C33–C56, and C37–C58.

The protein belongs to the DEFL family.

This Arabidopsis thaliana (Mouse-ear cress) protein is Defensin-like protein 41.